The primary structure comprises 184 residues: Photosystem I assembly protein Ycf4 (184 aa).

2 helical membrane passes run 21–43 and 58–80; these read NFCW…TSSY and IFFP…SSYL.

The protein belongs to the Ycf4 family.

Its subcellular location is the plastid. It localises to the chloroplast thylakoid membrane. Its function is as follows. Seems to be required for the assembly of the photosystem I complex. This Calycanthus floridus var. glaucus (Eastern sweetshrub) protein is Photosystem I assembly protein Ycf4.